Consider the following 391-residue polypeptide: NADH-quinone oxidoreductase subunit D (391 aa).

It belongs to the complex I 49 kDa subunit family. NDH-1 is composed of 14 different subunits. Subunits NuoB, C, D, E, F, and G constitute the peripheral sector of the complex.

The protein localises to the cell inner membrane. The catalysed reaction is a quinone + NADH + 5 H(+)(in) = a quinol + NAD(+) + 4 H(+)(out). Functionally, NDH-1 shuttles electrons from NADH, via FMN and iron-sulfur (Fe-S) centers, to quinones in the respiratory chain. The immediate electron acceptor for the enzyme in this species is believed to be ubiquinone. Couples the redox reaction to proton translocation (for every two electrons transferred, four hydrogen ions are translocated across the cytoplasmic membrane), and thus conserves the redox energy in a proton gradient. This is NADH-quinone oxidoreductase subunit D from Rickettsia akari (strain Hartford).